The chain runs to 86 residues: UPF0335 protein mll3968 (86 aa).

It belongs to the UPF0335 family.

This Mesorhizobium japonicum (strain LMG 29417 / CECT 9101 / MAFF 303099) (Mesorhizobium loti (strain MAFF 303099)) protein is UPF0335 protein mll3968.